We begin with the raw amino-acid sequence, 377 residues long: Nitric oxide reductase FlRd-NAD(+) reductase (377 aa).

This sequence belongs to the FAD-dependent oxidoreductase family. The cofactor is FAD.

Its subcellular location is the cytoplasm. It carries out the reaction 2 reduced [nitric oxide reductase rubredoxin domain] + NAD(+) + H(+) = 2 oxidized [nitric oxide reductase rubredoxin domain] + NADH. It participates in nitrogen metabolism; nitric oxide reduction. Functionally, one of at least two accessory proteins for anaerobic nitric oxide (NO) reductase. Reduces the rubredoxin moiety of NO reductase. This chain is Nitric oxide reductase FlRd-NAD(+) reductase, found in Salmonella arizonae (strain ATCC BAA-731 / CDC346-86 / RSK2980).